The chain runs to 221 residues: UPF0758 protein YicR (221 aa).

The MPN domain occupies 99 to 221; that stretch reads ALLSPEMTRE…YVSFAERGWI (123 aa). Histidine 170, histidine 172, and aspartate 183 together coordinate Zn(2+). The JAMM motif signature appears at 170 to 183; sequence HNHPSGCAEPSKAD.

The protein belongs to the UPF0758 family. YicR subfamily.

The sequence is that of UPF0758 protein YicR from Salmonella newport (strain SL254).